We begin with the raw amino-acid sequence, 133 residues long: Small ribosomal subunit protein uS8 (133 aa).

The protein belongs to the universal ribosomal protein uS8 family. As to quaternary structure, part of the 30S ribosomal subunit. Contacts proteins S5 and S12.

In terms of biological role, one of the primary rRNA binding proteins, it binds directly to 16S rRNA central domain where it helps coordinate assembly of the platform of the 30S subunit. This chain is Small ribosomal subunit protein uS8, found in Synechocystis sp. (strain ATCC 27184 / PCC 6803 / Kazusa).